The primary structure comprises 230 residues: MKSLNTLVILTSVISTSVFAGAYVENREAYNLASDQMEFMLRVGYNSDMGAGIMLTNTYTLQRDDELKHGYNEIEGWYPLFKPTDKLTIQPGGLINDKSIGSGGAVYLDINYKFTPWFNLTVRNRYNHNNYSSTDLNGELDNNDSYEIGNYWNFIITDKFSYTFEPHYFYNVNDFNSSNGTKHHWEITNTFRYRINEHWLPYFELRWLDRNVGLYHREQNQIRIGAKYFF.

An N-terminal signal peptide occupies residues 1–20; the sequence is MKSLNTLVILTSVISTSVFA.

Belongs to the oligogalacturonate-specific porin KdgM (TC 1.B.35) family. OmpL subfamily.

It is found in the cell outer membrane. In terms of biological role, outer membrane channel protein that allows an efficient diffusion of low-molecular-weight solutes such as small sugars and tetraglycine. However, the specific substrate recognized by the OmpL channel is unknown. This Salmonella typhi protein is Porin OmpL (ompL).